A 144-amino-acid chain; its full sequence is Large ribosomal subunit protein uL15 (144 aa).

Residues 1–51 (MELNSIKPGSGSKHAKRRVGRGIGSGLGKTAGRGHKGQKSRAGGYHKVGFE) form a disordered region. A compositionally biased stretch (gly residues) spans 21 to 31 (RGIGSGLGKTA).

It belongs to the universal ribosomal protein uL15 family. Part of the 50S ribosomal subunit.

Its function is as follows. Binds to the 23S rRNA. This chain is Large ribosomal subunit protein uL15, found in Leptothrix cholodnii (strain ATCC 51168 / LMG 8142 / SP-6) (Leptothrix discophora (strain SP-6)).